Reading from the N-terminus, the 344-residue chain is Deoxyhypusine hydroxylase (344 aa).

HEAT-like PBS-type repeat units follow at residues 81–107 and 115–140; these read LKHE…VLED and RHEA…FRDR. Residues H83, E84, H116, and E117 each contribute to the Fe cation site. Residues 169-188 form a disordered region; that stretch reads EKLRASDFSSVDPAPPTAQG. HEAT-like PBS-type repeat units follow at residues 210 to 240, 248 to 274, and 281 to 308; these read KRYR…LAKG, FRHE…ALSN, and VRHE…FLHD. 4 residues coordinate Fe cation: H250, E251, H283, and E284.

This sequence belongs to the deoxyhypusine hydroxylase family. The cofactor is Fe(2+).

It is found in the cytoplasm. Its subcellular location is the nucleus. The catalysed reaction is [eIF5A protein]-deoxyhypusine + AH2 + O2 = [eIF5A protein]-hypusine + A + H2O. Its pathway is protein modification; eIF5A hypusination. Functionally, catalyzes the hydroxylation of the N(6)-(4-aminobutyl)-L-lysine intermediate to form hypusine, an essential post-translational modification only found in mature eIF-5A factor. In Chaetomium globosum (strain ATCC 6205 / CBS 148.51 / DSM 1962 / NBRC 6347 / NRRL 1970) (Soil fungus), this protein is Deoxyhypusine hydroxylase.